We begin with the raw amino-acid sequence, 133 residues long: Hemoglobin subunit alpha-2 (133 aa).

The region spanning 1–133 (NVKAVWEHVK…VKNVLTSRYR (133 aa)) is the Globin domain. H50 lines the O2 pocket. Residue H79 coordinates heme b.

Belongs to the globin family. In terms of assembly, minor hemoglobin is a heterotetramer of two alpha-2 chains and two beta-2 chains. As to expression, red blood cells.

Its function is as follows. Involved in oxygen transport from the lung to the various peripheral tissues. This is Hemoglobin subunit alpha-2 from Pleurodeles waltl (Iberian ribbed newt).